Here is a 143-residue protein sequence, read N- to C-terminus: Large ribosomal subunit protein uL13 (143 aa).

It belongs to the universal ribosomal protein uL13 family. Part of the 50S ribosomal subunit.

This protein is one of the early assembly proteins of the 50S ribosomal subunit, although it is not seen to bind rRNA by itself. It is important during the early stages of 50S assembly. This chain is Large ribosomal subunit protein uL13, found in Rubrobacter xylanophilus (strain DSM 9941 / JCM 11954 / NBRC 16129 / PRD-1).